The sequence spans 333 residues: Olfactory receptor 9S13 (333 aa).

Residues 1–35 (MATAVHRNGSLTPVSLRVFVLVGFGGGALTQALLF) are Extracellular-facing. N-linked (GlcNAc...) asparagine glycosylation is present at Asn8. Residues 36–56 (AVFLVLYVVTVLGNLTMIVVI) traverse the membrane as a helical segment. Topologically, residues 57 to 72 (TLDARLHSPMYFFLKN) are cytoplasmic. Residues 73 to 93 (LSFVDLCYSSAIAPNALANFL) traverse the membrane as a helical segment. Residues 94-106 (STSKVISFEACAT) lie on the Extracellular side of the membrane. An intrachain disulfide couples Cys104 to Cys196. The helical transmembrane segment at 107-127 (QFFFFSLLATTETFLLAVMAY) threads the bilayer. Residues 128 to 150 (DRFMAICSPLRYPVTMCPTTCTR) lie on the Cytoplasmic side of the membrane. A helical membrane pass occupies residues 151–171 (LVLGTFCVGCLNSIVQTSLTF). Topologically, residues 172 to 203 (QLPFCSSNRIDHFYCDVPPLLQLACASTALNE) are extracellular. Residues 204-224 (LFLFGLCGFIIVSTTLAVLVS) traverse the membrane as a helical segment. The Cytoplasmic portion of the chain corresponds to 225-251 (YGYITVTILRMHSGSGRHKVFSTCGSH). A helical membrane pass occupies residues 252 to 272 (LTAVSLFYGTLFVMYAQPGAL). Residues 273 to 278 (TSMEQG) lie on the Extracellular side of the membrane. A helical membrane pass occupies residues 279 to 299 (KVVSIFYTLVIPMLNPLIYSL). Residues 300–333 (RNKDVKDALQRLGQRHSLVKAVRGCPAAGGNASV) are Cytoplasmic-facing.

The protein belongs to the G-protein coupled receptor 1 family.

It is found in the cell membrane. Its function is as follows. Odorant receptor. The protein is Olfactory receptor 9S13 of Mus musculus (Mouse).